The following is a 185-amino-acid chain: Probable prefoldin subunit 3 (185 aa).

This sequence belongs to the prefoldin subunit alpha family. Heterohexamer of two PFD-alpha type and four PFD-beta type subunits.

Binds specifically to cytosolic chaperonin (c-CPN) and transfers target proteins to it. Binds to nascent polypeptide chain and promotes folding in an environment in which there are many competing pathways for nonnative proteins. The chain is Probable prefoldin subunit 3 (pfd-3) from Caenorhabditis elegans.